A 104-amino-acid polypeptide reads, in one-letter code: MAAIQGIEGVISQLQATAMAARGQDTHSQSTVSFAGQLHAALDRISDRQAAARVQAEKFTLGEPGIALNDVMADMQKASVSMQMGIQVRNKLVAAYQEVMSMQV.

The protein belongs to the FliE family.

It is found in the bacterial flagellum basal body. This chain is Flagellar hook-basal body complex protein FliE, found in Salmonella heidelberg (strain SL476).